Reading from the N-terminus, the 84-residue chain is Metallothionein-like protein 2C (84 aa).

It belongs to the metallothionein superfamily. Type 15 family.

The protein resides in the cytoplasm. It is found in the cytosol. Metallothioneins have a high content of cysteine residues that bind various heavy metals. Acts as a reactive oxygen species (ROS) scavenger in the cytosol. Possesses superoxide anion and hydroxyl radical scavenging activities in vitro. Plays a role during root development, lateral root initiation and seed embryo germination, possibly by regulating levels of cytokinin. This chain is Metallothionein-like protein 2C (MT2C), found in Oryza sativa subsp. indica (Rice).